The following is a 135-amino-acid chain: Large ribosomal subunit protein uL16c (135 aa).

This sequence belongs to the universal ribosomal protein uL16 family. In terms of assembly, part of the 50S ribosomal subunit.

It is found in the plastid. The protein localises to the chloroplast. This is Large ribosomal subunit protein uL16c from Coffea arabica (Arabian coffee).